The following is an 84-amino-acid chain: Cell division topological specificity factor (84 aa).

The protein belongs to the MinE family.

In terms of biological role, prevents the cell division inhibition by proteins MinC and MinD at internal division sites while permitting inhibition at polar sites. This ensures cell division at the proper site by restricting the formation of a division septum at the midpoint of the long axis of the cell. The chain is Cell division topological specificity factor from Pseudomonas putida (strain W619).